The following is a 274-amino-acid chain: Caldesmon, smooth muscle (274 aa).

2 disordered regions span residues 1–102 (SNLK…FSPK) and 179–274 (KGNV…EKEP). 2 stretches are compositionally biased toward basic and acidic residues: residues 12-21 (GSEKLKEKQQ) and 28-95 (DELK…EKKP). Residues 182–194 (VFSSPGGTGTPNK) show a composition bias toward polar residues. Basic and acidic residues-rich tracts occupy residues 226-245 (SDLRPGDVSGKRNLWEKQSV) and 260-274 (KKSETDGLRQFEKEP).

It is found in the cytoplasm. The protein resides in the cytoskeleton. It localises to the myofibril. Its subcellular location is the stress fiber. Control of actomyosin interactions in smooth muscle and nonmuscle cells (could act as a bridge between myosin and actin filaments). Inhibits the actin-activated ATPase of myosin this inhibition is attenuated by calcium-calmodulin and is potentiated by tropomyosin. Interacts with actin, myosin, 2 molecules of tropomyosin and with calmodulin. This chain is Caldesmon, smooth muscle (CALD1), found in Meleagris gallopavo (Wild turkey).